We begin with the raw amino-acid sequence, 64 residues long: Kappa-lycotoxin-Os1a (64 aa).

Cystine bridges form between C10–C26, C17–C56, C19–C42, and C28–C40.

This sequence belongs to the neurotoxin 04 (omega-agtx) family. 01 (type I omega-agtx) subfamily. As to expression, expressed by the venom gland.

It is found in the secreted. Insecticidal to house crickets. It induces an excitatory slow-onset impact that leads to irreversible spastic paralysis. It also modifies human voltage-gated potassium channel Kv1.5/KCNA5. Most likely, it binds to the voltage-sensing domain of the channel, suggesting it does not block the pore but prevents its opening at physiological membrane potentials. The recombinant peptide binds to the channel in an irreversible manner and slows down the hKv1.5 current activation kinetics. It is not toxic to mice, when intracranially injected (at 0.5 ug/g mouse). In Oculicosa supermirabilis (Central Asian wolf-spider), this protein is Kappa-lycotoxin-Os1a.